The chain runs to 67 residues: Peptide Ctry2606 (67 aa).

The first 23 residues, 1–23 (MKTQTALFSFFLVLLLVATQTEG), serve as a signal peptide directing secretion. L33 bears the Leucine amide mark. Residues 37–67 (ALRNQNFVDYAFDPSLSAADWRALETLLEEY) constitute a propeptide that is removed on maturation.

Belongs to the non-disulfide-bridged peptide (NDBP) superfamily. Short antimicrobial peptide (group 4) family. As to expression, expressed by the venom gland.

It localises to the secreted. Its function is as follows. Antimicrobial peptide. In Chaerilus tryznai (Scorpion), this protein is Peptide Ctry2606.